Here is a 369-residue protein sequence, read N- to C-terminus: Cobalt-precorrin-5B C(1)-methyltransferase (369 aa).

Belongs to the CbiD family.

It carries out the reaction Co-precorrin-5B + S-adenosyl-L-methionine = Co-precorrin-6A + S-adenosyl-L-homocysteine. The protein operates within cofactor biosynthesis; adenosylcobalamin biosynthesis; cob(II)yrinate a,c-diamide from sirohydrochlorin (anaerobic route): step 6/10. In terms of biological role, catalyzes the methylation of C-1 in cobalt-precorrin-5B to form cobalt-precorrin-6A. This chain is Cobalt-precorrin-5B C(1)-methyltransferase, found in Methanococcus vannielii (strain ATCC 35089 / DSM 1224 / JCM 13029 / OCM 148 / SB).